Consider the following 245-residue polypeptide: 1-(5-phosphoribosyl)-5-[(5-phosphoribosylamino)methylideneamino] imidazole-4-carboxamide isomerase (245 aa).

Aspartate 8 (proton acceptor) is an active-site residue. Aspartate 130 (proton donor) is an active-site residue.

This sequence belongs to the HisA/HisF family.

It localises to the cytoplasm. It catalyses the reaction 1-(5-phospho-beta-D-ribosyl)-5-[(5-phospho-beta-D-ribosylamino)methylideneamino]imidazole-4-carboxamide = 5-[(5-phospho-1-deoxy-D-ribulos-1-ylimino)methylamino]-1-(5-phospho-beta-D-ribosyl)imidazole-4-carboxamide. It functions in the pathway amino-acid biosynthesis; L-histidine biosynthesis; L-histidine from 5-phospho-alpha-D-ribose 1-diphosphate: step 4/9. In Pseudomonas aeruginosa (strain LESB58), this protein is 1-(5-phosphoribosyl)-5-[(5-phosphoribosylamino)methylideneamino] imidazole-4-carboxamide isomerase.